The primary structure comprises 291 residues: MEEGLIDRLLETLWLDRRLNQNTLNGYRRDLEKIARRLSQSGRMLKDADEADLAAAVYVDGEQRSSQARALSACKRLYIWMEREGIRTDNPTRLLKPPKIDKNIPTLITEQQISRLLAAPDTDTPHGLRDKALLELMYATGLRVSEAVGLNFGNVDLDRGCITALGKGDKQRMVPMGQESAYWVGRYYTEARPALLKGRSCDALFVSQKKTGISRQLAWMIVKEYASQAGIGHISPHSLRHAFATHLVQHGLDLRVVQDMLGHADLNTTQIYTHVANVWLQGVVKEHHSRN.

A Core-binding (CB) domain is found at 1 to 82 (MEEGLIDRLL…ACKRLYIWME (82 aa)). Residues 103–285 (NIPTLITEQQ…ANVWLQGVVK (183 aa)) form the Tyr recombinase domain. Residues R143, K167, H237, R240, and H263 contribute to the active site. The active-site O-(3'-phospho-DNA)-tyrosine intermediate is Y272.

This sequence belongs to the 'phage' integrase family. XerD subfamily. In terms of assembly, forms a cyclic heterotetrameric complex composed of two molecules of XerC and two molecules of XerD.

It localises to the cytoplasm. Functionally, site-specific tyrosine recombinase, which acts by catalyzing the cutting and rejoining of the recombining DNA molecules. The XerC-XerD complex is essential to convert dimers of the bacterial chromosome into monomers to permit their segregation at cell division. It also contributes to the segregational stability of plasmids. In Neisseria meningitidis serogroup A / serotype 4A (strain DSM 15465 / Z2491), this protein is Tyrosine recombinase XerD.